The following is a 77-amino-acid chain: UPF0346 protein lin1971 (77 aa).

Belongs to the UPF0346 family.

The protein is UPF0346 protein lin1971 of Listeria innocua serovar 6a (strain ATCC BAA-680 / CLIP 11262).